The primary structure comprises 340 residues: Small ribosomal subunit biogenesis GTPase RsgA (340 aa).

The span at 20–34 (ERAERAERRARRDDT) shows a compositional bias: basic and acidic residues. Positions 20–42 (ERAERAERRARRDDTSLDAGDYG) are disordered. A CP-type G domain is found at 116–274 (RGQLKPVAAN…LIDSPGIREF (159 aa)). GTP is bound by residues 163-166 (NKTD) and 216-224 (GQSGVGKSS). Positions 298, 303, 305, and 311 each coordinate Zn(2+).

It belongs to the TRAFAC class YlqF/YawG GTPase family. RsgA subfamily. Monomer. Associates with 30S ribosomal subunit, binds 16S rRNA. Requires Zn(2+) as cofactor.

It is found in the cytoplasm. Its function is as follows. One of several proteins that assist in the late maturation steps of the functional core of the 30S ribosomal subunit. Helps release RbfA from mature subunits. May play a role in the assembly of ribosomal proteins into the subunit. Circularly permuted GTPase that catalyzes slow GTP hydrolysis, GTPase activity is stimulated by the 30S ribosomal subunit. This Chromohalobacter salexigens (strain ATCC BAA-138 / DSM 3043 / CIP 106854 / NCIMB 13768 / 1H11) protein is Small ribosomal subunit biogenesis GTPase RsgA.